The sequence spans 421 residues: C2H2 type master regulator of conidiophore development brlA (421 aa).

Polar residues predominate over residues 228-242 (THSPTTPLRSCSIGT). Positions 228-247 (THSPTTPLRSCSIGTASGPD) are disordered. 2 C2H2-type zinc fingers span residues 309–333 (FKCK…MKSH) and 339–364 (HVCW…TKTH). Residues 361 to 370 (TKTHSKRGGR) show a composition bias toward basic residues. A disordered region spans residues 361 to 421 (TKTHSKRGGR…REYSVDGLDD (61 aa)).

It localises to the nucleus. BrlA, abaA and wetA are pivotal regulators of conidiophore development and conidium maturation. They act individually and together to regulate their own expression and that of numerous other sporulation-specific genes. Binds promoters of target genes at brlA response elements (BREs) containing the conserved sequence 5'-(C/A)(A/G)AGGG(G/A)-3'. The chain is C2H2 type master regulator of conidiophore development brlA from Aspergillus parasiticus (strain ATCC 56775 / NRRL 5862 / SRRC 143 / SU-1).